The sequence spans 152 residues: Small ribosomal subunit protein uS13A (152 aa).

Belongs to the universal ribosomal protein uS13 family. In terms of assembly, component of the small ribosomal subunit (SSU). Mature yeast ribosomes consist of a small (40S) and a large (60S) subunit. The 40S small subunit contains 1 molecule of ribosomal RNA (18S rRNA) and at least 33 different proteins. The large 60S subunit contains 3 rRNA molecules (25S, 5.8S and 5S rRNA) and at least 46 different proteins.

It is found in the cytoplasm. Its function is as follows. Component of the ribosome, a large ribonucleoprotein complex responsible for the synthesis of proteins in the cell. The small ribosomal subunit (SSU) binds messenger RNAs (mRNAs) and translates the encoded message by selecting cognate aminoacyl-transfer RNA (tRNA) molecules. The large subunit (LSU) contains the ribosomal catalytic site termed the peptidyl transferase center (PTC), which catalyzes the formation of peptide bonds, thereby polymerizing the amino acids delivered by tRNAs into a polypeptide chain. The nascent polypeptides leave the ribosome through a tunnel in the LSU and interact with protein factors that function in enzymatic processing, targeting, and the membrane insertion of nascent chains at the exit of the ribosomal tunnel. The protein is Small ribosomal subunit protein uS13A (rps1801) of Schizosaccharomyces pombe (strain 972 / ATCC 24843) (Fission yeast).